Here is a 370-residue protein sequence, read N- to C-terminus: MASGSSSDAAEPAGPAGRAASAPEAAQAEEDRVKRRRLQCLGFALVGGCDPTMVPSVLRENDWQTQKALSAYFELPENDQGWPRQPPTSFKSEAYVDLTNEDANDTTILEASPSGTPLEDSSTISFITWNIDGLDGCNLPERARGVCSCLALYSPDVVFLQEVIPPYCAYLKKRAASYTIITGNEEGYFTAILLKKGRVKFKSQEIIPFPNTKMMRNLLCVNVSLGGNEFCLMTSHLESTREHSAERIRQLKTVLGKMQEAPDSTTVIFAGDTNLRDQEVIKCGGLPDNVFDAWEFLGKPKHCQYTWDTKANNNLRIPAAYKHRFDRIFFRAEEGHLIPQSLDLVGLEKLDCGRFPSDHWGLLCTLNVVL.

At M1 the chain carries N-acetylmethionine. The tract at residues 1–32 (MASGSSSDAAEPAGPAGRAASAPEAAQAEEDR) is disordered. Residues 9 to 26 (AAEPAGPAGRAASAPEAA) are compositionally biased toward low complexity. K34 participates in a covalent cross-link: Glycyl lysine isopeptide (Lys-Gly) (interchain with G-Cter in SUMO2). Position 99 is a phosphothreonine; by ACVR1B (T99). The tract at residues 130-134 (NIDGL) is interaction with 5' end of substrate DNA. Residues D132 and E162 each coordinate Mg(2+). Residues 236–241 (HLESTR) are interaction with 5' end of substrate DNA. Catalysis depends on D272, which acts as the Proton donor/acceptor. Interaction with 5' end of substrate DNA regions lie at residues 274-276 (NLR) and 315-321 (LRIPAAY).

This sequence belongs to the CCR4/nocturin family. In terms of assembly, interacts with TRAF2, TRAF3, TRAF5, TRAF6, TNFRSF8/CD30, TNFRSF5/CD40, TNFRSF1B/TNF-R75, ETS1, ETS2, FLI1, SMAD3 and ACVR1B/ALK4. Requires Mg(2+) as cofactor. Mn(2+) is required as a cofactor. Post-translationally, ubiquitinated by TRAF6. As to expression, widely expressed. Expressed in whole brain, cerebellum, quiescent cortical astrocytes and cerebellar granule neurons.

It localises to the nucleus. It is found in the PML body. Its subcellular location is the nucleolus. The protein resides in the cytoplasm. Functionally, DNA repair enzyme that can remove a variety of covalent adducts from DNA through hydrolysis of a 5'-phosphodiester bond, giving rise to DNA with a free 5' phosphate. Catalyzes the hydrolysis of dead-end complexes between DNA and the topoisomerase 2 (TOP2) active site tyrosine residue. The 5'-tyrosyl DNA phosphodiesterase activity can enable the repair of TOP2-induced DNA double-strand breaks/DSBs without the need for nuclease activity, creating a 'clean' DSB with 5'-phosphate termini that are ready for ligation. Thereby, protects the transcription of many genes involved in neurological development and maintenance from the abortive activity of TOP2. Hydrolyzes 5'-phosphoglycolates on protruding 5' ends on DSBs due to DNA damage by radiation and free radicals. Has preference for single-stranded DNA or duplex DNA with a 4 base pair overhang as substrate. Also has 3'-tyrosyl DNA phosphodiesterase activity, but less efficiently and much slower than TDP1. Constitutes the major if not only 5'-tyrosyl-DNA phosphodiesterase in cells. Also acts as an adapter by participating in the specific activation of MAP3K7/TAK1 in response to TGF-beta: associates with components of the TGF-beta receptor-TRAF6-TAK1 signaling module and promotes their ubiquitination dependent complex formation. Involved in non-canonical TGF-beta induced signaling routes. May also act as a negative regulator of ETS1 and may inhibit NF-kappa-B activation. Acts as a regulator of ribosome biogenesis following stress. This chain is Tyrosyl-DNA phosphodiesterase 2 (Tdp2), found in Mus musculus (Mouse).